The following is a 185-amino-acid chain: Elongation factor P (185 aa).

This sequence belongs to the elongation factor P family.

It is found in the cytoplasm. Its pathway is protein biosynthesis; polypeptide chain elongation. In terms of biological role, involved in peptide bond synthesis. Stimulates efficient translation and peptide-bond synthesis on native or reconstituted 70S ribosomes in vitro. Probably functions indirectly by altering the affinity of the ribosome for aminoacyl-tRNA, thus increasing their reactivity as acceptors for peptidyl transferase. This chain is Elongation factor P, found in Desulforudis audaxviator (strain MP104C).